Consider the following 166-residue polypeptide: 3-isopropylmalate dehydratase small subunit (166 aa).

The protein belongs to the LeuD family. LeuD type 2 subfamily. In terms of assembly, heterodimer of LeuC and LeuD.

It carries out the reaction (2R,3S)-3-isopropylmalate = (2S)-2-isopropylmalate. It participates in amino-acid biosynthesis; L-leucine biosynthesis; L-leucine from 3-methyl-2-oxobutanoate: step 2/4. In terms of biological role, catalyzes the isomerization between 2-isopropylmalate and 3-isopropylmalate, via the formation of 2-isopropylmaleate. This is 3-isopropylmalate dehydratase small subunit from Caldicellulosiruptor bescii (strain ATCC BAA-1888 / DSM 6725 / KCTC 15123 / Z-1320) (Anaerocellum thermophilum).